A 1248-amino-acid polypeptide reads, in one-letter code: Structural polyprotein (1248 aa).

Residues 1-10 (MEFIPTQTFY) are compositionally biased toward polar residues. The tract at residues 1 to 104 (MEFIPTQTFY…KKKKPGRRER (104 aa)) is disordered. Residues 22 to 44 (RPTIQVIRPRPRPQRQAGQLAQL) show a composition bias toward low complexity. A host transcription inhibition region spans residues 36–68 (RQAGQLAQLISAVNKLTMRAVPQQKPRRNRKNK). A compositionally biased stretch (basic residues) spans 60–72 (KPRRNRKNKKQKQ). The short motif at 61-99 (PRRNRKNKKQKQKQQAPQNNTNQKKQPPKKKPAQKKKKP) is the Nuclear localization signal element. The segment covering 73 to 85 (KQQAPQNNTNQKK) has biased composition (low complexity). Residues 84 to 114 (KKQPPKKKPAQKKKKPGRRERMCMKIENDCI) are binding to the viral RNA. The span at 86–101 (QPPKKKPAQKKKKPGR) shows a compositional bias: basic residues. Residues 99–113 (PGRRERMCMKIENDC) form a ribosome-binding region. C113 and C128 are disulfide-bonded. The 149-residue stretch at 113 to 261 (CIFEVKHEGK…KITPEGAEEW (149 aa)) folds into the Peptidase S3 domain. H139 (charge relay system) is an active-site residue. The short motif at 144–154 (IDNADLAKLAF) is the Nuclear export signal element. Residues 155–160 (KRSSKY) are interaction with spike glycoprotein E2. The active-site Charge relay system is the D161. Residues 183-193 (PEGYYNWHHGA) are dimerization of the capsid protein. Catalysis depends on S213, which acts as the Charge relay system. A dimerization of the capsid protein region spans residues 219 to 223 (DNKGR). Residues 262-274 (SLAIPVMCLLANT) are functions as an uncleaved signal peptide for the precursor of protein E3/E2. The Extracellular portion of the chain corresponds to 262–692 (SLAIPVMCLL…YYYELYPTMT (431 aa)). Intrachain disulfides connect C269–C278, C283–C287, C286–C318, C344–C450, C347–C353, C416–C430, C478–C591, C526–C550, and C528–C545. N-linked (GlcNAc...) asparagine; by host glycosylation occurs at N273. Interaction with host Mxra8 receptor stretches follow at residues 351–354 (HSCH) and 387–389 (HDW). Interaction with host Mxra8 receptor stretches follow at residues 509–512 (QSGN) and 541–547 (VINNCKV). N-linked (GlcNAc...) asparagine; by host glycosylation is found at N588 and N670. The chain crosses the membrane as a helical span at residues 693-713 (VVVVSVASFILLSMVGMAVGM). Residues 714–748 (CMCARRRCITPYELTPGATVPFLLSLICCIRTAKA) lie on the Cytoplasmic side of the membrane. The tract at residues 716–720 (CARRR) is interaction with the capsid protein. Residues C721, C741, and C742 are each lipidated (S-palmitoyl cysteine; by host). Residues 721 to 741 (CITPYELTPGATVPFLLSLIC) are transient transmembrane before p62-6K protein processing. C721 and C742 are oxidised to a cystine. The Extracellular segment spans residues 749–763 (ATYQEAAVYLWNEQQ). The helical transmembrane segment at 764-784 (PLFWLQALIPLAALIVLCNCL) threads the bilayer. The Cytoplasmic segment spans residues 785 to 795 (RLLPCCCKTLA). Residues 796–816 (FLAVMSIGAHTVSAYEHVTVI) traverse the membrane as a helical segment. The Extracellular segment spans residues 817-1224 (PNTVGVPYKT…AMSWVQKITG (408 aa)). 4 cysteine pairs are disulfide-bonded: C858-C923, C871-C903, C872-C905, and C877-C887. Residues 893-910 (VYPFMWGGAYCFCDAENT) are E1 fusion peptide loop. N-linked (GlcNAc...) asparagine; by host glycans are attached at residues N950 and N1079. Disulfide bonds link C1068-C1080, C1110-C1185, C1115-C1189, and C1137-C1179. Residues 1225-1245 (GVGLVVAVAALILIVVLCVSF) traverse the membrane as a helical segment. C1242 carries the S-palmitoyl cysteine; by host lipid modification. A lipid anchor (S-stearoyl cysteine; by host) is attached at C1242. At 1246–1248 (SRH) the chain is on the cytoplasmic side.

This sequence belongs to the alphavirus structural polyprotein family. In terms of assembly, homodimer. Homomultimer. Interacts with host karyopherin KPNA4; this interaction allows the nuclear import of the viral capsid protein. Interacts with spike glycoprotein E2. Interacts with host IRAK1; the interaction leads to inhibition of IRAK1-dependent signaling. The precursor of protein E3/E2 and E1 form a heterodimer shortly after synthesis. As to quaternary structure, interacts with spike glycoprotein E2. The precursor of protein E3/E2 and E1 form a heterodimer shortly after synthesis. Processing of the precursor of protein E3/E2 into E2 and E3 results in a heterodimer of the spike glycoproteins E2 and E1. Spike at virion surface are constituted of three E2-E1 heterodimers. After target cell attachment and endocytosis, E1 changes conformation to form homotrimers. Interacts with 6K protein. Interacts with host MXRA8; this interaction mediates virus entry. The interaction involves 2 adjacent E2-E1 heterodimers. In terms of assembly, interacts with spike glycoprotein E1. Processing of the precursor of protein E3/E2 into E2 and E3 results in a heterodimer of the spike glycoproteins E2 and E1. Spike at virion surface are constituted of a trimer of E2-E1 heterodimers. Interacts with 6K protein. Interacts with host MXRA8; this interaction mediates virus entry. The interaction involves 2 adjacent E2-E1 heterodimers. Oligomer. Interacts with spike glycoprotein E1. Interacts with spike glycoprotein E2. Post-translationally, specific enzymatic cleavages in vivo yield mature proteins. Capsid protein is auto-cleaved during polyprotein translation, unmasking a signal peptide at the N-terminus of the precursor of E3/E2. The remaining polyprotein is then targeted to the host endoplasmic reticulum, where host signal peptidase cleaves it into pE2, 6K and E1 proteins. pE2 is further processed to mature E3 and E2 by host furin in trans-Golgi vesicle. Palmitoylated via thioester bonds. These palmitoylations may induce disruption of the C-terminus transmembrane. This would result in the reorientation of E2 C-terminus from lumenal to cytoplasmic side. In terms of processing, N-glycosylated. Post-translationally, palmitoylated via thioester bonds.

Its subcellular location is the virion. The protein localises to the host cytoplasm. It is found in the host cell membrane. The protein resides in the host nucleus. It localises to the virion membrane. Its subcellular location is the host Golgi apparatus. The protein localises to the host trans-Golgi network. It is found in the host endoplasmic reticulum. It carries out the reaction Autocatalytic release of the core protein from the N-terminus of the togavirus structural polyprotein by hydrolysis of a -Trp-|-Ser- bond.. Forms an icosahedral capsid with a T=4 symmetry composed of 240 copies of the capsid protein surrounded by a lipid membrane through which penetrate 80 spikes composed of trimers of E1-E2 heterodimers. The capsid protein binds to the viral RNA genome at a site adjacent to a ribosome binding site for viral genome translation following genome release. Possesses a protease activity that results in its autocatalytic cleavage from the nascent structural protein. Following its self-cleavage, the capsid protein transiently associates with ribosomes, and within several minutes the protein binds to viral RNA and rapidly assembles into icosahedric core particles. The resulting nucleocapsid eventually associates with the cytoplasmic domain of the spike glycoprotein E2 at the cell membrane, leading to budding and formation of mature virions. In case of infection, new virions attach to target cells and after clathrin-mediated endocytosis their membrane fuses with the host endosomal membrane. This leads to the release of the nucleocapsid into the cytoplasm, followed by an uncoating event necessary for the genomic RNA to become accessible. The uncoating might be triggered by the interaction of capsid proteins with ribosomes. Binding of ribosomes would release the genomic RNA since the same region is genomic RNA-binding and ribosome-binding. Specifically inhibits interleukin-1 receptor-associated kinase 1/IRAK1-dependent signaling during viral entry, representing a means by which the alphaviruses may evade innate immune detection and activation prior to viral gene expression. Degrades host cyclic GMP-AMP synthase (CGAS) thereby inhibiting the cGAS-STING pathway. Its function is as follows. Provides the signal sequence for the translocation of the precursor of protein E3/E2 to the host endoplasmic reticulum. Furin-cleaved E3 remains associated with spike glycoprotein E1 and mediates pH protection of the latter during the transport via the secretory pathway. After virion release from the host cell, the assembly protein E3 is gradually released in the extracellular space. Functionally, plays a role in viral attachment to target host cell, by binding to the cell receptor MXRA8. Synthesized as a p62 precursor which is processed by furin at the cell membrane just before virion budding, giving rise to E2-E1 heterodimer. The p62-E1 heterodimer is stable, whereas E2-E1 is unstable and dissociate at low pH. p62 is processed at the last step, presumably to avoid E1 fusion activation before its final export to cell surface. E2 C-terminus contains a transitory transmembrane that would be disrupted by palmitoylation, resulting in reorientation of the C-terminal tail from lumenal to cytoplasmic side. This step is critical since E2 C-terminus is involved in budding by interacting with capsid proteins. This release of E2 C-terminus in cytoplasm occurs lately in protein export, and precludes premature assembly of particles at the endoplasmic reticulum membrane. In terms of biological role, acts as a viroporin that participates in virus glycoprotein processing and transport to the plasma membrane, cell permeabilization and budding of viral particles. Disrupts the calcium homeostasis of the cell, probably at the endoplasmic reticulum level. This leads to cytoplasmic calcium elevation. Because of its lipophilic properties, the 6K protein is postulated to influence the selection of lipids that interact with the transmembrane domains of the glycoproteins, which, in turn, affects the deformability of the bilayer required for the extreme curvature that occurs as budding proceeds. Present in low amount in virions, about 3% compared to viral glycoproteins. Class II viral fusion protein. Fusion activity is inactive as long as E1 is bound to E2 in mature virion. After virus attachment to target cell and endocytosis, acidification of the endosome induce dissociation of E1/E2 heterodimer and concomitant trimerization of the E1 subunits. This E1 trimer is fusion active, and promotes release of viral nucleocapsid in cytoplasm after endosome and viral membrane fusion. Efficient fusion requires the presence of cholesterol and sphingolipid in the target membrane. This chain is Structural polyprotein, found in Chikungunya virus (strain S27-African prototype) (CHIKV).